Consider the following 166-residue polypeptide: uncharacterized protein (166 aa).

Gly residues-rich tracts occupy residues 1 to 10 (MNYGNNGGGQ) and 76 to 86 (YRGGGGGGGGN). The segment at 1-117 (MNYGNNGGGQ…GGGNKNFGPI (117 aa)) is disordered.

This is an uncharacterized protein from Caenorhabditis elegans.